Here is a 100-residue protein sequence, read N- to C-terminus: Large ribosomal subunit protein uL23 (100 aa).

The protein belongs to the universal ribosomal protein uL23 family. As to quaternary structure, part of the 50S ribosomal subunit. Contacts protein L29, and trigger factor when it is bound to the ribosome.

In terms of biological role, one of the early assembly proteins it binds 23S rRNA. One of the proteins that surrounds the polypeptide exit tunnel on the outside of the ribosome. Forms the main docking site for trigger factor binding to the ribosome. In Mycolicibacterium paratuberculosis (strain ATCC BAA-968 / K-10) (Mycobacterium paratuberculosis), this protein is Large ribosomal subunit protein uL23.